We begin with the raw amino-acid sequence, 462 residues long: 3-isopropylmalate dehydratase large subunit (462 aa).

Positions 337, 397, and 400 each coordinate [4Fe-4S] cluster.

Belongs to the aconitase/IPM isomerase family. LeuC type 1 subfamily. Heterodimer of LeuC and LeuD. [4Fe-4S] cluster serves as cofactor.

The catalysed reaction is (2R,3S)-3-isopropylmalate = (2S)-2-isopropylmalate. It functions in the pathway amino-acid biosynthesis; L-leucine biosynthesis; L-leucine from 3-methyl-2-oxobutanoate: step 2/4. Its function is as follows. Catalyzes the isomerization between 2-isopropylmalate and 3-isopropylmalate, via the formation of 2-isopropylmaleate. The polypeptide is 3-isopropylmalate dehydratase large subunit (Listeria innocua serovar 6a (strain ATCC BAA-680 / CLIP 11262)).